The following is a 256-amino-acid chain: N-acetyl-D-glucosamine kinase (256 aa).

Residues 4 to 11 (GFDMGGTK) and 133 to 140 (GVGGGLIV) each bind ATP. Residues His157, Cys177, Cys179, and Cys184 each coordinate Zn(2+).

Belongs to the ROK (NagC/XylR) family. NagK subfamily.

It catalyses the reaction N-acetyl-D-glucosamine + ATP = N-acetyl-D-glucosamine 6-phosphate + ADP + H(+). It functions in the pathway cell wall biogenesis; peptidoglycan recycling. In terms of biological role, catalyzes the phosphorylation of N-acetyl-D-glucosamine (GlcNAc) derived from cell-wall degradation, yielding GlcNAc-6-P. This chain is N-acetyl-D-glucosamine kinase (nagK), found in Yersinia pestis bv. Antiqua (strain Nepal516).